We begin with the raw amino-acid sequence, 343 residues long: UDP-3-O-acylglucosamine N-acyltransferase (343 aa).

Histidine 236 (proton acceptor) is an active-site residue.

It belongs to the transferase hexapeptide repeat family. LpxD subfamily. As to quaternary structure, homotrimer.

It carries out the reaction a UDP-3-O-[(3R)-3-hydroxyacyl]-alpha-D-glucosamine + a (3R)-hydroxyacyl-[ACP] = a UDP-2-N,3-O-bis[(3R)-3-hydroxyacyl]-alpha-D-glucosamine + holo-[ACP] + H(+). It functions in the pathway bacterial outer membrane biogenesis; LPS lipid A biosynthesis. In terms of biological role, catalyzes the N-acylation of UDP-3-O-acylglucosamine using 3-hydroxyacyl-ACP as the acyl donor. Is involved in the biosynthesis of lipid A, a phosphorylated glycolipid that anchors the lipopolysaccharide to the outer membrane of the cell. In Syntrophotalea carbinolica (strain DSM 2380 / NBRC 103641 / GraBd1) (Pelobacter carbinolicus), this protein is UDP-3-O-acylglucosamine N-acyltransferase.